Here is a 127-residue protein sequence, read N- to C-terminus: Aspartate 1-decarboxylase (127 aa).

Ser25 acts as the Schiff-base intermediate with substrate; via pyruvic acid in catalysis. At Ser25 the chain carries Pyruvic acid (Ser). Position 57 (Thr57) interacts with substrate. Residue Tyr58 is the Proton donor of the active site. 73-75 (GSA) contributes to the substrate binding site.

The protein belongs to the PanD family. Heterooctamer of four alpha and four beta subunits. Pyruvate serves as cofactor. In terms of processing, is synthesized initially as an inactive proenzyme, which is activated by self-cleavage at a specific serine bond to produce a beta-subunit with a hydroxyl group at its C-terminus and an alpha-subunit with a pyruvoyl group at its N-terminus.

It is found in the cytoplasm. The enzyme catalyses L-aspartate + H(+) = beta-alanine + CO2. The protein operates within cofactor biosynthesis; (R)-pantothenate biosynthesis; beta-alanine from L-aspartate: step 1/1. In terms of biological role, catalyzes the pyruvoyl-dependent decarboxylation of aspartate to produce beta-alanine. This chain is Aspartate 1-decarboxylase, found in Dechloromonas aromatica (strain RCB).